The following is a 442-amino-acid chain: tRNA modification GTPase MnmE (442 aa).

Residues Arg27, Glu84, and Lys124 each contribute to the (6S)-5-formyl-5,6,7,8-tetrahydrofolate site. A TrmE-type G domain is found at 221-366; that stretch reads GFQIVILGAP…LMELISQASA (146 aa). Residues 231-236, 250-256, 275-278, and 329-332 contribute to the GTP site; these read NAGKSS, TEEPGTT, DTAG, and NKAD. Residues Ser235 and Thr256 each contribute to the Mg(2+) site. Lys442 is a binding site for (6S)-5-formyl-5,6,7,8-tetrahydrofolate.

Belongs to the TRAFAC class TrmE-Era-EngA-EngB-Septin-like GTPase superfamily. TrmE GTPase family. Homodimer. Heterotetramer of two MnmE and two MnmG subunits. K(+) serves as cofactor.

Its subcellular location is the cytoplasm. Its function is as follows. Exhibits a very high intrinsic GTPase hydrolysis rate. Involved in the addition of a carboxymethylaminomethyl (cmnm) group at the wobble position (U34) of certain tRNAs, forming tRNA-cmnm(5)s(2)U34. This is tRNA modification GTPase MnmE from Chelativorans sp. (strain BNC1).